The chain runs to 304 residues: Ornithine carbamoyltransferase (304 aa).

Carbamoyl phosphate is bound by residues 53 to 56 (STRT), glutamine 80, arginine 104, and 131 to 134 (HPCQ). L-ornithine-binding positions include asparagine 162, aspartate 219, and 223-224 (SM). Carbamoyl phosphate contacts are provided by residues 259–260 (CL) and arginine 287.

It belongs to the aspartate/ornithine carbamoyltransferase superfamily. OTCase family.

It localises to the cytoplasm. The catalysed reaction is carbamoyl phosphate + L-ornithine = L-citrulline + phosphate + H(+). It participates in amino-acid biosynthesis; L-arginine biosynthesis; L-arginine from L-ornithine and carbamoyl phosphate: step 1/3. Its function is as follows. Reversibly catalyzes the transfer of the carbamoyl group from carbamoyl phosphate (CP) to the N(epsilon) atom of ornithine (ORN) to produce L-citrulline. This Nitrosococcus oceani (strain ATCC 19707 / BCRC 17464 / JCM 30415 / NCIMB 11848 / C-107) protein is Ornithine carbamoyltransferase.